The primary structure comprises 150 residues: Large ribosomal subunit protein bL9 (150 aa).

Belongs to the bacterial ribosomal protein bL9 family.

Functionally, binds to the 23S rRNA. The protein is Large ribosomal subunit protein bL9 of Staphylococcus aureus (strain NCTC 8325 / PS 47).